The following is a 515-amino-acid chain: MVSIPEYYEGKNVLLTGATGFLGKVLLEKLLRSCPKVNSVYVLVRQKAGQTPQERVEEVLSGKLFDRLRDENPDFREKIIAINSELTQPKLALSEEDKEVIIDSTNIIFHCAATVRFNENLRDAVQLNVIATRQLILLAQQMKNLEVFMHVSTAYAYCNRKHIDEVVYPPPVDPKKLIDSLEWMDDGLVNDITPKLIGDRPNTYIYTKALAEYVVQQEGAKLNVAIVRPSIVGASWKEPFPGWIDNFNGPSGLFIAAGKGILRTIRASNNALADLVPVDVVVNMSLAAAWYSGVNRPRNIMVYNCTTGSTNPFHWGEVEYHVISTFKRNPLEQAFRRPNVNLTSNHLLYHYWIAVSHKAPAFLYDIYLRMTGRSPRMMKTITRLHKAMVFLEYFTSNSWVWNTENVNMLMNQLNPEDKKTFNIDVRQLHWAEYIENYCLGTKKYVLNEEMSGLPAARKHLNKLRNIRYGFNTILVILIWRIFIARSQMARNIWYFVVSLCYKFLSYFRASSTMRY.

Residues 1–465 lie on the Cytoplasmic side of the membrane; sequence MVSIPEYYEG…ARKHLNKLRN (465 aa). Residues 451–507 form a necessary and sufficient for PEX19-mediated localization into peroxisome membrane region; that stretch reads SGLPAARKHLNKLRNIRYGFNTILVILIWRIFIARSQMARNIWYFVVSLCYKFLSYF. A helical membrane pass occupies residues 466 to 483; the sequence is IRYGFNTILVILIWRIFI. The Peroxisomal segment spans residues 484-515; that stretch reads ARSQMARNIWYFVVSLCYKFLSYFRASSTMRY.

Belongs to the fatty acyl-CoA reductase family. Interacts with PEX19; PEX19 mediates the targeting of FAR1 to peroxisomes.

The protein resides in the peroxisome membrane. It catalyses the reaction a long-chain fatty acyl-CoA + 2 NADPH + 2 H(+) = a long-chain primary fatty alcohol + 2 NADP(+) + CoA. The enzyme catalyses hexadecanoyl-CoA + 2 NADPH + 2 H(+) = hexadecan-1-ol + 2 NADP(+) + CoA. It carries out the reaction octadecanoyl-CoA + 2 NADPH + 2 H(+) = octadecan-1-ol + 2 NADP(+) + CoA. The catalysed reaction is eicosanoyl-CoA + 2 NADPH + 2 H(+) = eicosan-1-ol + 2 NADP(+) + CoA. It catalyses the reaction (9Z)-octadecenoyl-CoA + 2 NADPH + 2 H(+) = (9Z)-octadecen-1-ol + 2 NADP(+) + CoA. The enzyme catalyses (9Z,12Z)-octadecadienoyl-CoA + 2 NADPH + 2 H(+) = (9Z,12Z)-octadecadien-1-ol + 2 NADP(+) + CoA. It carries out the reaction 16-methylheptadecanoyl-CoA + 2 NADPH + 2 H(+) = 16-methylheptadecan-1-ol + 2 NADP(+) + CoA. The catalysed reaction is 18-methylnonadecanoyl-CoA + 2 NADPH + 2 H(+) = 18-methylnonadecan-1-ol + 2 NADP(+) + CoA. In terms of biological role, catalyzes the reduction of saturated and unsaturated C16 or C18 fatty acyl-CoA to fatty alcohols. It plays an essential role in the production of ether lipids/plasmalogens which synthesis requires fatty alcohols. In parallel, it is also required for wax monoesters production since fatty alcohols also constitute a substrate for their synthesis. In Homo sapiens (Human), this protein is Fatty acyl-CoA reductase 1.